The primary structure comprises 251 residues: Enolase-phosphatase E1 (251 aa).

Mg(2+) contacts are provided by Asp13 and Glu15. Substrate contacts are provided by residues 137-138 and Lys183; that span reads SS. Asp210 contacts Mg(2+).

Belongs to the HAD-like hydrolase superfamily. MasA/MtnC family. As to quaternary structure, monomer. The cofactor is Mg(2+).

It localises to the cytoplasm. Its subcellular location is the nucleus. The enzyme catalyses 5-methylsulfanyl-2,3-dioxopentyl phosphate + H2O = 1,2-dihydroxy-5-(methylsulfanyl)pent-1-en-3-one + phosphate. It participates in amino-acid biosynthesis; L-methionine biosynthesis via salvage pathway; L-methionine from S-methyl-5-thio-alpha-D-ribose 1-phosphate: step 3/6. The protein operates within amino-acid biosynthesis; L-methionine biosynthesis via salvage pathway; L-methionine from S-methyl-5-thio-alpha-D-ribose 1-phosphate: step 4/6. Bifunctional enzyme that catalyzes the enolization of 2,3-diketo-5-methylthiopentyl-1-phosphate (DK-MTP-1-P) into the intermediate 2-hydroxy-3-keto-5-methylthiopentenyl-1-phosphate (HK-MTPenyl-1-P), which is then dephosphorylated to form the acireductone 1,2-dihydroxy-3-keto-5-methylthiopentene (DHK-MTPene). In Candida glabrata (strain ATCC 2001 / BCRC 20586 / JCM 3761 / NBRC 0622 / NRRL Y-65 / CBS 138) (Yeast), this protein is Enolase-phosphatase E1.